Here is a 270-residue protein sequence, read N- to C-terminus: tRNA pseudouridine synthase A (270 aa).

Residue Asp-60 is the Nucleophile of the active site. The segment at 107 to 111 (FHARF) is RNA binding. Tyr-118 contacts substrate. Residues 168–172 (QCQSR) form an interaction with tRNA region.

It belongs to the tRNA pseudouridine synthase TruA family. Homodimer.

It carries out the reaction uridine(38/39/40) in tRNA = pseudouridine(38/39/40) in tRNA. Functionally, formation of pseudouridine at positions 38, 39 and 40 in the anticodon stem and loop of transfer RNAs. The protein is tRNA pseudouridine synthase A of Citrobacter koseri (strain ATCC BAA-895 / CDC 4225-83 / SGSC4696).